Here is a 589-residue protein sequence, read N- to C-terminus: Formate--tetrahydrofolate ligase (589 aa).

Threonine 74–serine 81 is a binding site for ATP.

This sequence belongs to the formate--tetrahydrofolate ligase family.

The catalysed reaction is (6S)-5,6,7,8-tetrahydrofolate + formate + ATP = (6R)-10-formyltetrahydrofolate + ADP + phosphate. The protein operates within one-carbon metabolism; tetrahydrofolate interconversion. The chain is Formate--tetrahydrofolate ligase from Thermodesulfovibrio yellowstonii (strain ATCC 51303 / DSM 11347 / YP87).